The primary structure comprises 183 residues: MMGKQLTAQVPAEPVVLGKMGSSYGIRGWLRVFSSTEDAESIFDYQPWFIQKADQWQQVQLESWKHHNQDLIIKLKGVDDRDAANLLTNCEIVVDSSQLPALEEGDYYWKDLMGCQVVTAEGYDLGKVIDMMETGSNDVLVIKANLKDAFGIKERLVPFLDGQVIKKVDLATRTIEVDWDPGF.

A PRC barrel domain is found at E104–F183.

It belongs to the RimM family. In terms of assembly, binds ribosomal protein uS19.

The protein resides in the cytoplasm. Functionally, an accessory protein needed during the final step in the assembly of 30S ribosomal subunit, possibly for assembly of the head region. Essential for efficient processing of 16S rRNA. May be needed both before and after RbfA during the maturation of 16S rRNA. It has affinity for free ribosomal 30S subunits but not for 70S ribosomes. This Salmonella arizonae (strain ATCC BAA-731 / CDC346-86 / RSK2980) protein is Ribosome maturation factor RimM.